The chain runs to 358 residues: Methylthioribose-1-phosphate isomerase (358 aa).

Substrate-binding positions include 54-56 (RGA), Arg-96, and Gln-205. Asp-246 acts as the Proton donor in catalysis. 256 to 257 (NK) provides a ligand contact to substrate.

Belongs to the eIF-2B alpha/beta/delta subunits family. MtnA subfamily.

The enzyme catalyses 5-(methylsulfanyl)-alpha-D-ribose 1-phosphate = 5-(methylsulfanyl)-D-ribulose 1-phosphate. It participates in amino-acid biosynthesis; L-methionine biosynthesis via salvage pathway; L-methionine from S-methyl-5-thio-alpha-D-ribose 1-phosphate: step 1/6. Functionally, catalyzes the interconversion of methylthioribose-1-phosphate (MTR-1-P) into methylthioribulose-1-phosphate (MTRu-1-P). The protein is Methylthioribose-1-phosphate isomerase of Azotobacter vinelandii (strain DJ / ATCC BAA-1303).